Reading from the N-terminus, the 205-residue chain is uncharacterized protein (205 aa).

The region spanning 11–71 (DKRQAEILEA…RIIETGLDEG (61 aa)) is the HTH tetR-type domain. A DNA-binding region (H-T-H motif) is located at residues 34–53 (TMKDVVEESGFSRGGVYLYF).

This is an uncharacterized protein from Bacillus subtilis (strain 168).